Here is a 314-residue protein sequence, read N- to C-terminus: Serine/threonine-protein phosphatase PP2A-5 catalytic subunit (314 aa).

Mn(2+) is bound by residues D62, H64, D90, and N122. H123 serves as the catalytic Proton donor. Mn(2+) is bound by residues H172 and H246.

This sequence belongs to the PPP phosphatase family. PP-2A subfamily. Mn(2+) is required as a cofactor.

It localises to the cytoplasm. The enzyme catalyses O-phospho-L-seryl-[protein] + H2O = L-seryl-[protein] + phosphate. It catalyses the reaction O-phospho-L-threonyl-[protein] + H2O = L-threonyl-[protein] + phosphate. In Nicotiana tabacum (Common tobacco), this protein is Serine/threonine-protein phosphatase PP2A-5 catalytic subunit (NPP5).